A 127-amino-acid chain; its full sequence is Putative pre-16S rRNA nuclease (127 aa).

The protein belongs to the YqgF nuclease family.

The protein resides in the cytoplasm. Functionally, could be a nuclease involved in processing of the 5'-end of pre-16S rRNA. This chain is Putative pre-16S rRNA nuclease, found in Campylobacter jejuni subsp. jejuni serotype O:23/36 (strain 81-176).